The chain runs to 201 residues: Small ribosomal subunit protein uS10m (201 aa).

Belongs to the universal ribosomal protein uS10 family. Component of the mitochondrial small ribosomal subunit (mt-SSU). Mature mammalian 55S mitochondrial ribosomes consist of a small (28S) and a large (39S) subunit. The 28S small subunit contains a 12S ribosomal RNA (12S mt-rRNA) and 30 different proteins. The 39S large subunit contains a 16S rRNA (16S mt-rRNA), a copy of mitochondrial valine transfer RNA (mt-tRNA(Val)), which plays an integral structural role, and 52 different proteins.

It is found in the mitochondrion. In Homo sapiens (Human), this protein is Small ribosomal subunit protein uS10m (MRPS10).